The chain runs to 241 residues: Nicotinamide riboside kinase (241 aa).

21–29 (GCSSSGKST) lines the ATP pocket. S28 and D47 together coordinate Mg(2+). Residue D47 is the Proton acceptor of the active site. Substrate contacts are provided by residues 47 to 50 (DDFY), 67 to 68 (WD), and D68. R163 lines the ATP pocket. A substrate-binding site is contributed by R164. Residues R167, 167 to 169 (RGG), and 213 to 215 (DVQ) contribute to the ATP site. Residue 169–170 (GY) coordinates substrate.

It belongs to the uridine kinase family. NRK subfamily.

It carries out the reaction beta-nicotinamide D-riboside + ATP = beta-nicotinamide D-ribonucleotide + ADP + H(+). It catalyses the reaction beta-D-ribosylnicotinate + ATP = nicotinate beta-D-ribonucleotide + ADP + H(+). It participates in cofactor biosynthesis; NAD(+) biosynthesis. In terms of biological role, catalyzes the phosphorylation of nicotinamide riboside (NR) and nicotinic acid riboside (NaR) to form nicotinamide mononucleotide (NMN) and nicotinic acid mononucleotide (NaMN). This chain is Nicotinamide riboside kinase (NRK1), found in Eremothecium gossypii (strain ATCC 10895 / CBS 109.51 / FGSC 9923 / NRRL Y-1056) (Yeast).